The primary structure comprises 75 residues: Dermaseptin-related peptide (75 aa).

The N-terminal stretch at 1 to 22 (MAFLNKSLLLVLFLGLVSLSIC) is a signal peptide. The propeptide occupies 23–43 (EEERRENEDEEEQEDDEQSEM). The segment at 24-44 (EERRENEDEEEQEDDEQSEMR) is disordered. The span at 30–40 (EDEEEQEDDEQ) shows a compositional bias: acidic residues. Residue glutamine 72 is modified to Glutamine amide. A propeptide spanning residues 74–75 (EQ) is cleaved from the precursor.

As to expression, expressed by the skin glands.

The protein resides in the secreted. Functionally, has antibacterial activity against Gram-positive bacterium M.luteus NCT C2665 but not against Gram-negative bacterium E.coli K12D31. The sequence is that of Dermaseptin-related peptide from Agalychnis callidryas (Red-eyed tree frog).